The chain runs to 266 residues: Electron transfer flavoprotein subunit beta (266 aa).

Belongs to the ETF beta-subunit/FixA family. Heterodimer of an alpha and a beta subunit. FAD serves as cofactor. Requires AMP as cofactor.

Functionally, the electron transfer flavoprotein serves as a specific electron acceptor for other dehydrogenases. It transfers the electrons to the main respiratory chain via ETF-ubiquinone oxidoreductase (ETF dehydrogenase). This Mycobacterium leprae (strain TN) protein is Electron transfer flavoprotein subunit beta (etfB).